The sequence spans 337 residues: Beta-glucosidase-like protein NCA3, mitochondrial (337 aa).

Residues 57-67 show a composition bias toward low complexity; that stretch reads ESAATTTTLSS. Residues 57-84 form a disordered region; that stretch reads ESAATTTTLSSSEKDTSEQKRDGGFQDG. Residues 68 to 80 are compositionally biased toward basic and acidic residues; sequence SEKDTSEQKRDGG.

The protein belongs to the SUN family.

Its subcellular location is the mitochondrion. Its function is as follows. Involved in the mitochondrial expression of subunits 6 and 8 of the F0-F1 ATP synthase. The protein is Beta-glucosidase-like protein NCA3, mitochondrial (NCA3) of Saccharomyces cerevisiae (strain ATCC 204508 / S288c) (Baker's yeast).